The primary structure comprises 629 residues: Dehydrogenase pyvF (629 aa).

A signal peptide spans 1 to 22; it reads MAGSPFTTALLSAWTLSTVAVG. Residues 61–62 and 82–83 contribute to the FAD site; these read AS and EA. N92 carries an N-linked (GlcNAc...) asparagine glycan. Position 144–147 (144–147) interacts with FAD; the sequence is NLMA. Residues N172, N182, N256, N284, N312, and N421 are each glycosylated (N-linked (GlcNAc...) asparagine). The active-site Proton acceptor is the H552. Residues A586 and 597–598 each bind FAD; that span reads PL.

Belongs to the GMC oxidoreductase family. In terms of assembly, homodimer. FAD is required as a cofactor.

Its pathway is secondary metabolite biosynthesis. Functionally, dehydrogenase; part of the gene cluster that mediates the biosynthesis of pyranoviolin A, a pyranonigrin analog with a C-3 methoxy group. Initially, the PKS portion of pyvA synthesizes C-10 carbon chain from 5 molecules of malonyl-CoA, which is then condensed with the thiolation (T) domain-bound glycine activated by the adenylation (A) domain. The subsequent chain release by Dieckmann condensation (DKC) could be catalyzed by the TE domain present at the C-terminus of pyvA and/or the alpha/beta hydrolase pyvD, installing the tetramic acid moiety. The FAD-dependent monooxygenase pyvC next epoxidizes one of the olefins of the polyketide part, and the epoxide ring-opening induces the dihydro-gamma-pyrone ring formation. The cytochrome P450 monooxygeanse pyvB would be responsible for the 2 consecutive reactions, in which the dihydro-gamma-pyrone is oxidized to gamma-pyrone and C-7 is hydroxylated to yield pyranonigrin F. Finally, the O-methyltransferase pyvH methylates the C-3 hydroxy group to complete the biosynthesis. This is Dehydrogenase pyvF from Aspergillus violaceofuscus (strain CBS 115571).